Reading from the N-terminus, the 174-residue chain is Peptide methionine sulfoxide reductase MsrA (174 aa).

Cys10 is a catalytic residue.

Belongs to the MsrA Met sulfoxide reductase family.

The enzyme catalyses L-methionyl-[protein] + [thioredoxin]-disulfide + H2O = L-methionyl-(S)-S-oxide-[protein] + [thioredoxin]-dithiol. The catalysed reaction is [thioredoxin]-disulfide + L-methionine + H2O = L-methionine (S)-S-oxide + [thioredoxin]-dithiol. In terms of biological role, has an important function as a repair enzyme for proteins that have been inactivated by oxidation. Catalyzes the reversible oxidation-reduction of methionine sulfoxide in proteins to methionine. The chain is Peptide methionine sulfoxide reductase MsrA from Paenarthrobacter aurescens (strain TC1).